Here is a 123-residue protein sequence, read N- to C-terminus: Ribosome-binding factor A (123 aa).

This sequence belongs to the RbfA family. In terms of assembly, monomer. Binds 30S ribosomal subunits, but not 50S ribosomal subunits or 70S ribosomes.

It is found in the cytoplasm. Functionally, one of several proteins that assist in the late maturation steps of the functional core of the 30S ribosomal subunit. Associates with free 30S ribosomal subunits (but not with 30S subunits that are part of 70S ribosomes or polysomes). Required for efficient processing of 16S rRNA. May interact with the 5'-terminal helix region of 16S rRNA. The polypeptide is Ribosome-binding factor A (Trichlorobacter lovleyi (strain ATCC BAA-1151 / DSM 17278 / SZ) (Geobacter lovleyi)).